A 474-amino-acid polypeptide reads, in one-letter code: UDP glycosyltransferase 9 (474 aa).

Residues serine 296, 349–350 (WC), 367–375 (HCGWNSTLE), and 389–392 (WADQ) each bind UDP-alpha-D-glucose.

It belongs to the UDP-glycosyltransferase family.

The polypeptide is UDP glycosyltransferase 9 (Catharanthus roseus (Madagascar periwinkle)).